A 779-amino-acid chain; its full sequence is Protein WEAK CHLOROPLAST MOVEMENT UNDER BLUE LIGHT-like 1 (779 aa).

Residues 1–119 are disordered; that stretch reads MEDLKTTDAL…NAVSPRPLYS (119 aa). Positions 79–88 are enriched in polar residues; the sequence is DSPTTPSFVS. Position 139 is a phosphoserine (S139). Coiled coils occupy residues 182–503, 532–587, and 657–715; these read RMKV…KQRE, KETR…ESRL, and AVSE…KWRE. Residues 650-661 are compositionally biased toward low complexity; it reads ANARVAAAVSEV. Disordered regions lie at residues 650–674 and 694–759; these read ANAR…SLEK and EKAE…NPVK. Composition is skewed to basic and acidic residues over residues 662-674 and 694-718; these read GEAK…SLEK and EKAE…EVSE. Residues 741-753 show a composition bias toward polar residues; the sequence is TSVSNETETNPIP.

This sequence belongs to the WEB family.

The polypeptide is Protein WEAK CHLOROPLAST MOVEMENT UNDER BLUE LIGHT-like 1 (WEL1) (Arabidopsis thaliana (Mouse-ear cress)).